Consider the following 279-residue polypeptide: Tryptophan 2,3-dioxygenase (279 aa).

Residues 48 to 52, tyrosine 110, and arginine 114 contribute to the substrate site; that span reads FIIQH. Histidine 237 contacts heme. Residue threonine 251 participates in substrate binding.

The protein belongs to the tryptophan 2,3-dioxygenase family. As to quaternary structure, homotetramer. Heme is required as a cofactor.

The catalysed reaction is L-tryptophan + O2 = N-formyl-L-kynurenine. It participates in amino-acid degradation; L-tryptophan degradation via kynurenine pathway; L-kynurenine from L-tryptophan: step 1/2. Functionally, heme-dependent dioxygenase that catalyzes the oxidative cleavage of the L-tryptophan (L-Trp) pyrrole ring and converts L-tryptophan to N-formyl-L-kynurenine. Catalyzes the oxidative cleavage of the indole moiety. This is Tryptophan 2,3-dioxygenase from Bradyrhizobium sp. (strain BTAi1 / ATCC BAA-1182).